The sequence spans 269 residues: Undecaprenyl-diphosphatase (269 aa).

A run of 7 helical transmembrane segments spans residues 41–61, 78–98, 107–127, 148–167, 184–204, 213–233, and 248–268; these read FATM…VFHY, GFNL…IGLL, LFSP…MIVI, SLLI…SRSA, AEFS…LSLL, LEWQ…LFVV, and FAYY…EKIV.

This sequence belongs to the UppP family.

The protein localises to the cell membrane. It catalyses the reaction di-trans,octa-cis-undecaprenyl diphosphate + H2O = di-trans,octa-cis-undecaprenyl phosphate + phosphate + H(+). Catalyzes the dephosphorylation of undecaprenyl diphosphate (UPP). Confers resistance to bacitracin. The sequence is that of Undecaprenyl-diphosphatase from Thermoanaerobacter pseudethanolicus (strain ATCC 33223 / 39E) (Clostridium thermohydrosulfuricum).